A 63-amino-acid polypeptide reads, in one-letter code: Large ribosomal subunit protein uL30 (63 aa).

This sequence belongs to the universal ribosomal protein uL30 family. In terms of assembly, part of the 50S ribosomal subunit.

This Rickettsia canadensis (strain McKiel) protein is Large ribosomal subunit protein uL30.